Here is a 617-residue protein sequence, read N- to C-terminus: Threonine--tRNA ligase (617 aa).

The tract at residues aspartate 209–proline 502 is catalytic. 3 residues coordinate Zn(2+): cysteine 302, histidine 353, and histidine 479.

This sequence belongs to the class-II aminoacyl-tRNA synthetase family. In terms of assembly, homodimer. Requires Zn(2+) as cofactor.

It is found in the cytoplasm. The enzyme catalyses tRNA(Thr) + L-threonine + ATP = L-threonyl-tRNA(Thr) + AMP + diphosphate + H(+). In terms of biological role, catalyzes the attachment of threonine to tRNA(Thr) in a two-step reaction: L-threonine is first activated by ATP to form Thr-AMP and then transferred to the acceptor end of tRNA(Thr). Also edits incorrectly charged L-seryl-tRNA(Thr). This chain is Threonine--tRNA ligase, found in Synechococcus sp. (strain CC9311).